The following is a 556-amino-acid chain: Formate--tetrahydrofolate ligase (556 aa).

Position 65 to 72 (65 to 72 (TPAGEGKT)) interacts with ATP.

The protein belongs to the formate--tetrahydrofolate ligase family.

It catalyses the reaction (6S)-5,6,7,8-tetrahydrofolate + formate + ATP = (6R)-10-formyltetrahydrofolate + ADP + phosphate. The protein operates within one-carbon metabolism; tetrahydrofolate interconversion. This Carboxydothermus hydrogenoformans (strain ATCC BAA-161 / DSM 6008 / Z-2901) protein is Formate--tetrahydrofolate ligase.